The chain runs to 858 residues: Coiled-coil and C2 domain-containing protein 1B (858 aa).

Disordered stretches follow at residues 112 to 164 (VLGV…GASQ), 180 to 199 (AAAS…CERG), 204 to 284 (ESQL…ALLS), 329 to 352 (VDLS…APTA), and 470 to 533 (EKLA…SPSV). Positions 114–143 (GVDEETEPLDGDEVADPGGSEEENGLEDTE) are enriched in acidic residues. The segment covering 153–164 (ASAPAAQAGASQ) has biased composition (low complexity). Residues 166–212 (LHALLEERIHNYREAAASAKEAGEAAKARRCERGLKTLESQLASVRR) adopt a coiled-coil conformation. The span at 186 to 199 (EAGEAAKARRCERG) shows a compositional bias: basic and acidic residues. The residue at position 209 (S209) is a Phosphoserine. The span at 520 to 532 (PRASSSKESPSPS) shows a compositional bias: low complexity. S593 is subject to Phosphoserine. T596 carries the post-translational modification Phosphothreonine. Residues 611 to 635 (RLSQKAEEVYAQLQKMLLEQQEKCL) are a coiled coil. Positions 676 to 815 (DPPTHHFELK…ENECEIREIV (140 aa)) constitute a C2 domain.

The protein belongs to the CC2D1 family. As to quaternary structure, interacts with CHMP4B. Widely distributed in brain and peripheral tissues.

The protein localises to the nucleus. Functionally, transcription factor that binds specifically to the DRE (dual repressor element) and represses HTR1A gene transcription in neuronal cells. The polypeptide is Coiled-coil and C2 domain-containing protein 1B (CC2D1B) (Homo sapiens (Human)).